Consider the following 172-residue polypeptide: 6,7-dimethyl-8-ribityllumazine synthase (172 aa).

5-amino-6-(D-ribitylamino)uracil is bound by residues Phe22 and 56–58 (AFE). 78–79 (LG) contributes to the (2S)-2-hydroxy-3-oxobutyl phosphate binding site. 80–82 (AII) provides a ligand contact to 5-amino-6-(D-ribitylamino)uracil. His88 acts as the Proton donor in catalysis. Phe113 serves as a coordination point for 5-amino-6-(D-ribitylamino)uracil. A (2S)-2-hydroxy-3-oxobutyl phosphate-binding site is contributed by Arg127.

This sequence belongs to the DMRL synthase family.

It carries out the reaction (2S)-2-hydroxy-3-oxobutyl phosphate + 5-amino-6-(D-ribitylamino)uracil = 6,7-dimethyl-8-(1-D-ribityl)lumazine + phosphate + 2 H2O + H(+). It participates in cofactor biosynthesis; riboflavin biosynthesis; riboflavin from 2-hydroxy-3-oxobutyl phosphate and 5-amino-6-(D-ribitylamino)uracil: step 1/2. Functionally, catalyzes the formation of 6,7-dimethyl-8-ribityllumazine by condensation of 5-amino-6-(D-ribitylamino)uracil with 3,4-dihydroxy-2-butanone 4-phosphate. This is the penultimate step in the biosynthesis of riboflavin. The protein is 6,7-dimethyl-8-ribityllumazine synthase of Protochlamydia amoebophila (strain UWE25).